The chain runs to 328 residues: Biotin synthase (328 aa).

In terms of domain architecture, Radical SAM core spans 48–278 (FTGNSASLCS…GKSLSVCGGR (231 aa)). [4Fe-4S] cluster contacts are provided by cysteine 66, cysteine 70, and cysteine 73. Residues serine 143 and cysteine 203 each coordinate [2Fe-2S] cluster.

Belongs to the radical SAM superfamily. Biotin synthase family. Homodimer. It depends on [4Fe-4S] cluster as a cofactor. [2Fe-2S] cluster serves as cofactor.

It carries out the reaction (4R,5S)-dethiobiotin + (sulfur carrier)-SH + 2 reduced [2Fe-2S]-[ferredoxin] + 2 S-adenosyl-L-methionine = (sulfur carrier)-H + biotin + 2 5'-deoxyadenosine + 2 L-methionine + 2 oxidized [2Fe-2S]-[ferredoxin]. The protein operates within cofactor biosynthesis; biotin biosynthesis; biotin from 7,8-diaminononanoate: step 2/2. Its function is as follows. Catalyzes the conversion of dethiobiotin (DTB) to biotin by the insertion of a sulfur atom into dethiobiotin via a radical-based mechanism. The chain is Biotin synthase from Pelobacter propionicus (strain DSM 2379 / NBRC 103807 / OttBd1).